Reading from the N-terminus, the 554-residue chain is (Z)-gamma-bisabolene synthase 1 (554 aa).

Mg(2+) contacts are provided by aspartate 306, aspartate 310, aspartate 450, and aspartate 458. The DDXXD motif motif lies at 306 to 310 (DDACD).

It belongs to the terpene synthase family. Tpsa subfamily. The cofactor is Mg(2+). Requires Mn(2+) as cofactor. Predominantly expressed in roots. Expressed in the cortex and the sub-epidermal layers of roots. Also detected in leaf hydathodes and flower stigmata.

It is found in the cytoplasm. It carries out the reaction (2E,6E)-farnesyl diphosphate = (Z)-gamma-bisabolene + diphosphate. Its pathway is secondary metabolite biosynthesis; terpenoid biosynthesis. Involved in sesquiterpene (C15) biosynthesis. The major product is (Z)-gamma-bisabolene with minor amounts of (E)-nerolidol and alpha-bisabolol. The chain is (Z)-gamma-bisabolene synthase 1 (TPS12) from Arabidopsis thaliana (Mouse-ear cress).